The following is a 555-amino-acid chain: MITVKVKNLTKKYGDFKALDKVSFEAKKGEILGIVGKSGAGKSTLIRILRGSLDYDEGEVEILGRKDNFKEITAIHLQRNFALWAEPVINNIIRKLYAIRNNADEQLPLEEEWEEYEKTAIEILKLVGLEHKKDAFANILSGGEKQRLILGRQIAKIYEKGEGVLLLDEPATMACPASKQKLLDVIKNIRDKLGITVIITSHLPEIHRYLCDRLILLENGKVKMDGDVEEVLNEFLKKMKPPYKRTPNIKDNAIIQVRNVSKRYYVVHGGETLNLRNVSFDVKEGEILSIIGPSGVGKTVIMRLMAGLELPDEGKIIVDGIDITNYGWERIELRKRIGIMHQEFSLPYYQTVENLLKYRLGLKGEKAIAHAKAKAEELGLSPKIVDALYQLIDVPESERISKLQKMGLTEDIIYKLFPPVVESFEPEEILEALDLGKDILKKKVIELSGGQKVRVAMALQLITKPKILFLDEPFGDLDPITLRDVANYLKIINERFGTTIVLVSHCVEFIKEISDRAILLDENRLVMEGNPEEVCEEFIRRSNARFMKEELKCKN.

2 ABC transporter domains span residues 4-244 (VKVK…PPYK) and 255-547 (IQVR…ARFM). Residues 36 to 43 (GKSGAGKS) and 292 to 299 (GPSGVGKT) contribute to the ATP site.

It belongs to the ABC transporter superfamily.

This is an uncharacterized protein from Methanocaldococcus jannaschii (strain ATCC 43067 / DSM 2661 / JAL-1 / JCM 10045 / NBRC 100440) (Methanococcus jannaschii).